Reading from the N-terminus, the 245-residue chain is tRNA pseudouridine synthase A (245 aa).

Asp52 (nucleophile) is an active-site residue. A substrate-binding site is contributed by Tyr111.

It belongs to the tRNA pseudouridine synthase TruA family. As to quaternary structure, homodimer.

The enzyme catalyses uridine(38/39/40) in tRNA = pseudouridine(38/39/40) in tRNA. Formation of pseudouridine at positions 38, 39 and 40 in the anticodon stem and loop of transfer RNAs. This Rhodopseudomonas palustris (strain BisB5) protein is tRNA pseudouridine synthase A.